The following is a 182-amino-acid chain: Adenine phosphoribosyltransferase (182 aa).

It belongs to the purine/pyrimidine phosphoribosyltransferase family. Homodimer.

The protein localises to the cytoplasm. It carries out the reaction AMP + diphosphate = 5-phospho-alpha-D-ribose 1-diphosphate + adenine. Its pathway is purine metabolism; AMP biosynthesis via salvage pathway; AMP from adenine: step 1/1. Functionally, catalyzes a salvage reaction resulting in the formation of AMP, that is energically less costly than de novo synthesis. The sequence is that of Adenine phosphoribosyltransferase from Campylobacter jejuni subsp. doylei (strain ATCC BAA-1458 / RM4099 / 269.97).